The following is a 420-amino-acid chain: Gamma-glutamyl phosphate reductase (420 aa).

The protein belongs to the gamma-glutamyl phosphate reductase family.

The protein localises to the cytoplasm. The catalysed reaction is L-glutamate 5-semialdehyde + phosphate + NADP(+) = L-glutamyl 5-phosphate + NADPH + H(+). It participates in amino-acid biosynthesis; L-proline biosynthesis; L-glutamate 5-semialdehyde from L-glutamate: step 2/2. Catalyzes the NADPH-dependent reduction of L-glutamate 5-phosphate into L-glutamate 5-semialdehyde and phosphate. The product spontaneously undergoes cyclization to form 1-pyrroline-5-carboxylate. This is Gamma-glutamyl phosphate reductase from Shewanella denitrificans (strain OS217 / ATCC BAA-1090 / DSM 15013).